We begin with the raw amino-acid sequence, 530 residues long: MLLAALCCLLWSFRTSTGHFPRACASSKSLMEKECCPPWSGDGSPCGQLSGRGACQDIILSNAPFGPQFPFTGVDDRESWPSVFYNRTCQCFGNFMGFNCGNCKFGFWGQNCTEKRLLVRKNIFDLSVPEKNKFLAYLTLAKHTTSPDYVIPTGTYGQMNNGSTPMFNDINIYDLFVWMHYYVSRDTLLGGSEIWKDIDFAHEAPGFLPWHRLFLLLWEQEIQKLTGDENFTIPYWDWRDAKSCDICTDEYMGGRNPANPNLLSPASFFSSWQIVCTRLEEYNSRQALCDGTPEGPLLRNPGNHDKARTPRLPSSADVEFCLSLTQYESDSMDKAANFSFRNTLEGFASPLTGIADASQSSMHNALHIYMNGTMSQVPGSANDPIFLLHHAFVDSIFEQWLRRHHPLREVYPEANAPIGHNRESYMVPFIPLYRNGDLFISSRDLGYDYSNLQESERDIFQDYIKPYLEQASRIWPWLIGAAVVGCVVTAVLGGLTSLLCRRNRKQLHEEKQPLLMEKEDYHSLLYQTHL.

The signal sequence occupies residues Met1 to Gly18. Over His19–Arg473 the chain is Lumenal, melanosome. Asn86, Asn111, and Asn161 each carry an N-linked (GlcNAc...) asparagine glycan. 3 residues coordinate Cu cation: His180, His202, and His211. 2 N-linked (GlcNAc...) asparagine glycosylation sites follow: Asn230 and Asn337. His363 and His367 together coordinate Cu cation. Asn371 carries an N-linked (GlcNAc...) asparagine glycan. His390 contacts Cu cation. A helical membrane pass occupies residues Ile474–Gly494. The Cytoplasmic portion of the chain corresponds to Leu495–Leu530.

This sequence belongs to the tyrosinase family. As to quaternary structure, forms an OPN3-dependent complex with DCT in response to blue light in melanocytes. The cofactor is Cu(2+). In terms of processing, glycosylated.

The protein localises to the melanosome membrane. Its subcellular location is the melanosome. The catalysed reaction is 2 L-dopa + O2 = 2 L-dopaquinone + 2 H2O. It carries out the reaction L-tyrosine + O2 = L-dopaquinone + H2O. The enzyme catalyses 2 5,6-dihydroxyindole-2-carboxylate + O2 = 2 indole-5,6-quinone-2-carboxylate + 2 H2O. This is a copper-containing oxidase that functions in the formation of pigments such as melanins and other polyphenolic compounds. Catalyzes the initial and rate limiting step in the cascade of reactions leading to melanin production from tyrosine. In addition to hydroxylating tyrosine to DOPA (3,4-dihydroxyphenylalanine), also catalyzes the oxidation of DOPA to DOPA-quinone, and possibly the oxidation of DHI (5,6-dihydroxyindole) to indole-5,6 quinone. The polypeptide is Tyrosinase (TYR) (Canis lupus familiaris (Dog)).